The sequence spans 160 residues: Transcriptional regulator MraZ (160 aa).

SpoVT-AbrB domains follow at residues 5 to 50 (KFDT…GDQV) and 93 to 136 (AVEC…SQAV).

Belongs to the MraZ family. As to quaternary structure, forms oligomers.

It localises to the cytoplasm. It is found in the nucleoid. This chain is Transcriptional regulator MraZ, found in Geobacter sp. (strain M21).